The sequence spans 276 residues: Cytoskeleton protein RodZ (276 aa).

Residues 1-110 (MTSMRKKTIG…SSKKKKKKTS (110 aa)) are Cytoplasmic-facing. A helical; Signal-anchor for type II membrane protein membrane pass occupies residues 111-131 (FLPLFYFILFALSILIFVTYY). The Extracellular segment spans residues 132–276 (VWNYIQTQPE…GQITVTFTKN (145 aa)).

The protein belongs to the RodZ family. Interacts with MltG and MreC in the elongasome. Interacts with KhpB (also called EloR/Jag).

The protein localises to the cell membrane. Cytoskeletal protein that is involved in cell-shape control through regulation of the length of the long axis. Probably part of the elongasome which synthesizes peripheral peptidoglycan. This chain is Cytoskeleton protein RodZ, found in Streptococcus pneumoniae (strain ATCC BAA-255 / R6).